Here is a 574-residue protein sequence, read N- to C-terminus: MGSEDLERLLLGYALRDAVKHGGRASVGSVMSMLLGDHPELRSRAREIASLAARVVEQVNSMPAGEQKRLLSEQYPELARFEEQREKGDKGLPPLPGAVEGRVKLRFAPNPDFVIHMGNARPAIVNHEYARMYKGRMVLRFEDTDPRTKTPLREAYDLIRQDLKWLGVSWDEEYIQSLRMEVFYSVARRAIERGCAYVDNCGREGKELLSRGEYCPTRDLGPEDNLELFEKMLEGEFYEGEAVVRMKTDPRHPNPSLRDWVAMRIIDTEKHPHPLVGSRYLVWPTYNFAVSVDDHMMEITHVLRGKEHQLNTEKQLAVYRCMGWRPPYFIHFGRLKLEGFILSKSKIRKLLEERPGEFMGYDDPRFGTIAGLRRRGVLAEAIRQIILEVGVKPTDATISWANLAAANRKLLDERADRIMYVEDPVEMEVELAQVECRAAEIPFHPSRPQRKRRITLCTGDKVLLTREDAVEGRQLRLMGLSNFTVSQGILREVDPSLEYARRMKLPIVQWVKKGGEASVEVLEPVELELRRHQGYAEDAIRGYGVDSRLQFVRYGFVRVDSVEDGVYRVIYTHK.

A 'HIGH' region motif is present at residues 109 to 119; the sequence is PNPDFVIHMGN.

The protein belongs to the class-I aminoacyl-tRNA synthetase family. Glutamate--tRNA ligase type 2 subfamily.

The protein resides in the cytoplasm. It carries out the reaction tRNA(Glu) + L-glutamate + ATP = L-glutamyl-tRNA(Glu) + AMP + diphosphate. In terms of biological role, catalyzes the attachment of glutamate to tRNA(Glu) in a two-step reaction: glutamate is first activated by ATP to form Glu-AMP and then transferred to the acceptor end of tRNA(Glu). This chain is Glutamate--tRNA ligase, found in Aeropyrum pernix (strain ATCC 700893 / DSM 11879 / JCM 9820 / NBRC 100138 / K1).